The sequence spans 645 residues: MSDKTYPVSAYWNERAYINAAKYKDMYKRSIEEPDLFWGEEGKRIDWIKPYTKVKNTSFDPANVDIRWFEDGITNVAYNCIDRHLATRGDQTAILFEGDDPADSRAITYKELHDSVCRLANVLKAHGVGKGDTVSLYLPMIPEAAFAMLACARIGAIHSVIFGGFSPDSLAGRIEGCRSKVLITADEGLRGGRKVPLKANADLAIAKTGDIVQTMIVVTRTGGAVDWVEGRDVRYEEAIAAASPECPLTEVEAEHPLFILYTSGSTGAPKGVVHCTGGYLVYASMTHQYVFDYHDGDVYWCTADVGWVTGHSYIVYGPLANGATTLMFEGVPNYPSVSRFWEVIDKHKVTIFYTAPTAIRALMGSGEAPVKKTSRASLRLLGSVGEPINPEAWEWYHRVVGEERCPIVDTWWQTETGGILITPLPGATPEKPGSATLPFFGVKPQVVDATGAVLEGVCEGNLVIADSWPGQMRTIFGDHDRFVQSYFSTYPGKYFTGDGCRRDADGYYWITGRVDDVINVSGHRLGTAEVESSLVAHELVSEAAVVGYPHDIKGQGIYAYVTLMNGIEPSDRLRTELVTWVRKDIGPIATPDVVHFATGLPKTRSGKIMRRILRKIAEKEFSALGDVSTLADPTIVDDLIRNRLG.

Residues 190–193, Thr309, and Asn333 contribute to the CoA site; that span reads RGGR. Residues 385 to 387, 409 to 414, Asp498, and Arg513 each bind ATP; these read GEP and DTWWQT. Ser521 provides a ligand contact to CoA. An ATP-binding site is contributed by Arg524. Residues Val535, His537, and Val540 each contribute to the Mg(2+) site. Arg582 lines the CoA pocket. An N6-acetyllysine modification is found at Lys607.

This sequence belongs to the ATP-dependent AMP-binding enzyme family. The cofactor is Mg(2+). Post-translationally, acetylated. Deacetylation by the SIR2-homolog deacetylase activates the enzyme.

It carries out the reaction acetate + ATP + CoA = acetyl-CoA + AMP + diphosphate. In terms of biological role, catalyzes the conversion of acetate into acetyl-CoA (AcCoA), an essential intermediate at the junction of anabolic and catabolic pathways. AcsA undergoes a two-step reaction. In the first half reaction, AcsA combines acetate with ATP to form acetyl-adenylate (AcAMP) intermediate. In the second half reaction, it can then transfer the acetyl group from AcAMP to the sulfhydryl group of CoA, forming the product AcCoA. This chain is Acetyl-coenzyme A synthetase, found in Beijerinckia indica subsp. indica (strain ATCC 9039 / DSM 1715 / NCIMB 8712).